A 308-amino-acid chain; its full sequence is UDP-N-acetylenolpyruvoylglucosamine reductase (308 aa).

One can recognise an FAD-binding PCMH-type domain in the interval 22 to 185; that stretch reads RVGGPADWLF…VEAAFRADAG (164 aa). Arg165 is an active-site residue. Over residues 197–211 the composition is skewed to basic and acidic residues; the sequence is QIARRDSSQPTRDRS. The disordered stretch occupies residues 197–228; sequence QIARRDSSQPTRDRSAGSTFRNPAGFSSTGRA. The segment covering 212 to 226 has biased composition (polar residues); it reads AGSTFRNPAGFSSTG. Residue Ser214 is the Proton donor of the active site. Glu296 is an active-site residue.

The protein belongs to the MurB family. FAD is required as a cofactor.

It is found in the cytoplasm. The enzyme catalyses UDP-N-acetyl-alpha-D-muramate + NADP(+) = UDP-N-acetyl-3-O-(1-carboxyvinyl)-alpha-D-glucosamine + NADPH + H(+). The protein operates within cell wall biogenesis; peptidoglycan biosynthesis. Cell wall formation. In Cereibacter sphaeroides (strain ATCC 17025 / ATH 2.4.3) (Rhodobacter sphaeroides), this protein is UDP-N-acetylenolpyruvoylglucosamine reductase.